The sequence spans 1416 residues: DNA-directed RNA polymerase subunit beta (1416 aa).

Residues 1388–1416 (AKAAREQAEGELGGPLGTPRGAAAEKNTA) form a disordered region.

Belongs to the RNA polymerase beta chain family. As to quaternary structure, the RNAP catalytic core consists of 2 alpha, 1 beta, 1 beta' and 1 omega subunit. When a sigma factor is associated with the core the holoenzyme is formed, which can initiate transcription.

The catalysed reaction is RNA(n) + a ribonucleoside 5'-triphosphate = RNA(n+1) + diphosphate. In terms of biological role, DNA-dependent RNA polymerase catalyzes the transcription of DNA into RNA using the four ribonucleoside triphosphates as substrates. This chain is DNA-directed RNA polymerase subunit beta, found in Anaeromyxobacter sp. (strain Fw109-5).